Here is a 368-residue protein sequence, read N- to C-terminus: Decarboxylase yanB (368 aa).

Residues H7, H9, and H159 each contribute to the Zn(2+) site. The N-linked (GlcNAc...) asparagine glycan is linked to N169. Residue D283 coordinates Zn(2+). A helical membrane pass occupies residues 339–359 (WGAFSACLLLPVGLSALYSVL).

This sequence belongs to the metallo-dependent hydrolases superfamily. ACMSD family.

Its subcellular location is the membrane. The catalysed reaction is 6-methylsalicylate + H(+) = 3-methylphenol + CO2. It participates in secondary metabolite biosynthesis; terpenoid biosynthesis. Decarboxylase; part of the gene cluster that mediates the biosynthesis of yanuthone D, a fungal isoprenoid epoxycyclohexenone that acts as an antibiotic against fungi and bacteria. The first step of the pathway is the synthesis of 6-methylsalicylic acid (6-MSA) by the polyketide synthase yanA. 6-MSA is then converted to m-cresol by the decarboxylase yanB. The cytochrome P450 monooxygenase yanC then catalyzes the oxidation of m-cresol to toluquinol. Epoxidation of toluquinol is then performed by the short chain dehydrogenase yanD, with the help of yanE, and a further prenylation by yanG leads to 7-deacetoxyyanuthone A. The next step is the hydroxylation of C-22 of 7-deacetoxyyanuthone A by the cytochrome P450 monooxygenase yanH to yield 22-deacetylyanuthone A. O-Mevalon transferase yanI then attaches mevalon to the hydroxyl group of 22-deacetylyanuthone A to produce yanuthone E. Finally, the FAD-dependent monooxygenase yanF oxidizes the hydroxyl group at C15 of yanuthone E to form yanuthone D. Furthermore, several branching points in the pathway lead to the production of yanuthones F and G from 7-deacetoxyyanuthone A; yanuthones H and I from 22-deacetylyanuthone A; and yanuthone J from yanuthone E. This Aspergillus niger (strain ATCC 1015 / CBS 113.46 / FGSC A1144 / LSHB Ac4 / NCTC 3858a / NRRL 328 / USDA 3528.7) protein is Decarboxylase yanB.